The chain runs to 506 residues: Proline--tRNA ligase (506 aa).

Belongs to the class-II aminoacyl-tRNA synthetase family. ProS type 3 subfamily. As to quaternary structure, homodimer.

It localises to the cytoplasm. It catalyses the reaction tRNA(Pro) + L-proline + ATP = L-prolyl-tRNA(Pro) + AMP + diphosphate. Its function is as follows. Catalyzes the attachment of proline to tRNA(Pro) in a two-step reaction: proline is first activated by ATP to form Pro-AMP and then transferred to the acceptor end of tRNA(Pro). The sequence is that of Proline--tRNA ligase from Akkermansia muciniphila (strain ATCC BAA-835 / DSM 22959 / JCM 33894 / BCRC 81048 / CCUG 64013 / CIP 107961 / Muc).